A 102-amino-acid chain; its full sequence is Small ribosomal subunit protein uS10 (102 aa).

This sequence belongs to the universal ribosomal protein uS10 family. In terms of assembly, part of the 30S ribosomal subunit.

Involved in the binding of tRNA to the ribosomes. The protein is Small ribosomal subunit protein uS10 of Rhodospirillum rubrum (strain ATCC 11170 / ATH 1.1.1 / DSM 467 / LMG 4362 / NCIMB 8255 / S1).